Here is a 151-residue protein sequence, read N- to C-terminus: MLAGCYPRPGDLLTRVLATGTFDILHPGHVYFLTQARALGDELFVIIARDSNVTHKPKPIVPEEQRLEMVNALGTVDKALLGSEKDMFEPLKEIRPDIIVLGYDQHFDIELLEEELTKRGLPAKVVRVPLSKECPLCSTGAIIKAVLKRYG.

ATP is bound by residues threonine 21 to phenylalanine 22, histidine 26 to histidine 29, and aspartate 104.

This sequence belongs to the archaeal FAD synthase family. As to quaternary structure, homodimer. The cofactor is a divalent metal cation.

It catalyses the reaction FMN + ATP + H(+) = FAD + diphosphate. It participates in cofactor biosynthesis; FAD biosynthesis; FAD from FMN: step 1/1. Functionally, catalyzes the transfer of the AMP portion of ATP to flavin mononucleotide (FMN) to produce flavin adenine dinucleotide (FAD) coenzyme. In Methanosarcina acetivorans (strain ATCC 35395 / DSM 2834 / JCM 12185 / C2A), this protein is FAD synthase.